A 401-amino-acid chain; its full sequence is Renin-2 (401 aa).

Positions 1 to 25 are cleaved as a signal peptide; the sequence is MDRRRMPLWALLLLWSPCTFSLPTG. Residues 26-63 constitute a propeptide, activation peptide; that stretch reads TTFERIPLKKMPSVREILEERGVDMTRLSAEWDVFTKR. The Peptidase A1 domain maps to 83–398; that stretch reads YYGEIGIGTP…DRHNNRIGFA (316 aa). Asp101 is a catalytic residue. Disulfide bonds link Cys114/Cys121 and Cys277/Cys281. Asp286 is an active-site residue. A disulfide bridge links Cys320 with Cys357.

Belongs to the peptidase A1 family. In terms of assembly, dimer of a heavy chain and a light chain joined by a disulfide bond. Submandibular gland.

Its subcellular location is the secreted. It catalyses the reaction Cleavage of Leu-|-Xaa bond in angiotensinogen to generate angiotensin I.. Its function is as follows. Renin is a highly specific endopeptidase, related to pepsin, whose only known function is to generate angiotensin I from angiotensinogen in the plasma, initiating a cascade of reactions that produce an elevation of blood pressure and increased sodium retention by the kidney. The polypeptide is Renin-2 (Mus musculus (Mouse)).